A 257-amino-acid polypeptide reads, in one-letter code: Transcription factor MYB4 (257 aa).

HTH myb-type domains lie at 9–61 (KMGL…INYL) and 62–116 (RPDI…KKRL). 2 consecutive DNA-binding regions (H-T-H motif) follow at residues 37–61 (WRALPKQAGLLRCGKSCRLRWINYL) and 89–112 (WSAIAARLPGRTDNEIKNVWHTHL). The tract at residues 115–179 (RLDAPAQGGH…VAEEHGNAGI (65 aa)) is disordered. Residues 130 to 140 (GKKHKKPKSAK) are compositionally biased toward basic residues. Positions 141–170 (KPAAAAAAPPASPERSASSSVTESSMASSV) are enriched in low complexity.

The protein resides in the nucleus. Its function is as follows. Transcriptional activator involved in cold stress response. Regulates positively the expression of genes involved in reactive oxygen species (ROS) scavenging such as peroxidase and superoxide dismutase during cold stress. Transactivates a complex gene network that have major effects on stress tolerance and panicle development. This Oryza sativa subsp. japonica (Rice) protein is Transcription factor MYB4.